Here is a 567-residue protein sequence, read N- to C-terminus: Thiol:disulfide interchange protein DsbD (567 aa).

The N-terminal stretch at 1 to 19 (MAQRIFTLILLLCSTSAFA) is a signal peptide. 2 disulfide bridges follow: C122-C128 and C185-C307. 7 helical membrane-spanning segments follow: residues 170–192 (ALWA…MYPL), 212–234 (LAFI…VAAA), 246–268 (YVLI…LFTL), 297–319 (GAIA…LLYI), 326–348 (WLGG…LVTV), 358–380 (GPWM…VFLL), and 387–409 (AWGL…ITSL). Residues 435–567 (QDWAFGSPSA…FSAHLHDRQP (133 aa)) enclose the Thioredoxin domain. C482 and C485 are oxidised to a cystine.

It belongs to the thioredoxin family. DsbD subfamily.

The protein resides in the cell inner membrane. The catalysed reaction is [protein]-dithiol + NAD(+) = [protein]-disulfide + NADH + H(+). It carries out the reaction [protein]-dithiol + NADP(+) = [protein]-disulfide + NADPH + H(+). In terms of biological role, required to facilitate the formation of correct disulfide bonds in some periplasmic proteins and for the assembly of the periplasmic c-type cytochromes. Acts by transferring electrons from cytoplasmic thioredoxin to the periplasm. This transfer involves a cascade of disulfide bond formation and reduction steps. The polypeptide is Thiol:disulfide interchange protein DsbD (Salmonella typhimurium (strain LT2 / SGSC1412 / ATCC 700720)).